The primary structure comprises 362 residues: MKTFLRHQLERYAQRLGELDFLLSREDIMSDMAQYRTISREHAEITQIAGRYERYKQREADIAGAAEMLEDPDMAEMAREEIAAAQAELVQLEEELQRLLLPKDPDDARNAFLEIRAGTGGDESALFAGDLLRMYTRYCERAGWRCEVVSESESELGGYKEVVIRIAGNDVFGRLRFESGGHRVQRVPATETQGRIHTSACTVAVLAEPDETVAVQINPADLRIDTYRASGAGGQHINKTDSAVRITHIPTGIVAECQDDRSQHRNKAKALQVLSARIQEKDRSERAAKDAAMRKGLIGSGDRSDRIRTYNFPQGRLTDHRINLTLYKLQAIMEGDLGDVLDALRAAREAEQLAELESSLPA.

Q235 is subject to N5-methylglutamine.

Belongs to the prokaryotic/mitochondrial release factor family. Post-translationally, methylated by PrmC. Methylation increases the termination efficiency of RF1.

The protein localises to the cytoplasm. Functionally, peptide chain release factor 1 directs the termination of translation in response to the peptide chain termination codons UAG and UAA. In Variovorax paradoxus (strain S110), this protein is Peptide chain release factor 1.